The following is a 105-amino-acid chain: MIASKFGIGQQVRHSLLGYLGVVVDIDPVYSLSEPSPDELAVNDELRAAPWYHVVMEDDNGLPVHTYLAEAQLSSELQDERPEQPSMDELAQTIRKQRQAPRLRN.

The interval 74-105 (SSELQDERPEQPSMDELAQTIRKQRQAPRLRN) is disordered. The segment covering 95–105 (RKQRQAPRLRN) has biased composition (basic residues).

It belongs to the HspQ family.

The protein localises to the cytoplasm. Its function is as follows. Involved in the degradation of certain denaturated proteins, including DnaA, during heat shock stress. The sequence is that of Heat shock protein HspQ from Shigella dysenteriae serotype 1 (strain Sd197).